Consider the following 369-residue polypeptide: 3-dehydroquinate synthase (369 aa).

NAD(+) contacts are provided by residues 78 to 83 (DGERYK), 112 to 116 (GVIGD), 136 to 137 (TT), K149, K158, and 176 to 179 (TLTT). 3 residues coordinate Zn(2+): E191, H254, and H271.

The protein belongs to the sugar phosphate cyclases superfamily. Dehydroquinate synthase family. NAD(+) serves as cofactor. It depends on Co(2+) as a cofactor. The cofactor is Zn(2+).

The protein localises to the cytoplasm. It catalyses the reaction 7-phospho-2-dehydro-3-deoxy-D-arabino-heptonate = 3-dehydroquinate + phosphate. The protein operates within metabolic intermediate biosynthesis; chorismate biosynthesis; chorismate from D-erythrose 4-phosphate and phosphoenolpyruvate: step 2/7. Catalyzes the conversion of 3-deoxy-D-arabino-heptulosonate 7-phosphate (DAHP) to dehydroquinate (DHQ). This chain is 3-dehydroquinate synthase, found in Nitrosomonas europaea (strain ATCC 19718 / CIP 103999 / KCTC 2705 / NBRC 14298).